The sequence spans 520 residues: Cytochrome P450 4F8 (520 aa).

Residues 15 to 37 (AASPWLLLLVVGASWLLARILAW) traverse the membrane as a helical segment. A heme-binding site is contributed by cysteine 468.

This sequence belongs to the cytochrome P450 family. Heme serves as cofactor. In terms of tissue distribution, expressed in the epithelium of seminal vesicles, in renal cortex, in adult and fetal liver, in epidermis, in corneal epithelium, in sweat glands, hair follicles, epithelial linings of the ampulla of vas deferens and of the stomach and small intestine, as well as in the transitional epithelium of the bladder and ureter (at protein level). In the epidermis, expressed from the basal cell to the granular cell layers. In the corneal epithelium, expressed in all cell layers. Also detected in prostate. Up-regulated in the epidermis of psoriatic lesions.

The protein localises to the endoplasmic reticulum membrane. Its subcellular location is the microsome membrane. It carries out the reaction an organic molecule + reduced [NADPH--hemoprotein reductase] + O2 = an alcohol + oxidized [NADPH--hemoprotein reductase] + H2O + H(+). The enzyme catalyses (5Z,8Z,11Z,14Z)-eicosatetraenoate + reduced [NADPH--hemoprotein reductase] + O2 = (18R)-hydroxy-(5Z,8Z,11Z,14Z)-eicosatetraenoate + oxidized [NADPH--hemoprotein reductase] + H2O + H(+). It catalyses the reaction (4Z,7Z,10Z,13Z,16Z)-docosapentaenoate + reduced [NADPH--hemoprotein reductase] + O2 = 20-hydroxy-(4Z,7Z,10Z,13Z,16Z)-docosapentaenoate + oxidized [NADPH--hemoprotein reductase] + H2O + H(+). The catalysed reaction is prostaglandin H1 + reduced [NADPH--hemoprotein reductase] + O2 = 19-hydroxyprostaglandin H1 + oxidized [NADPH--hemoprotein reductase] + H2O + H(+). It carries out the reaction prostaglandin H2 + reduced [NADPH--hemoprotein reductase] + O2 = 19-hydroxyprostaglandin H2 + oxidized [NADPH--hemoprotein reductase] + H2O + H(+). The enzyme catalyses prostaglandin I2 + reduced [NADPH--hemoprotein reductase] + O2 = 19-hydroxy-prostaglandin I2 + oxidized [NADPH--hemoprotein reductase] + H2O + H(+). It catalyses the reaction (4Z,7Z,10Z,13Z,16Z,19Z)-docosahexaenoate + reduced [NADPH--hemoprotein reductase] + O2 = 10,11-epoxy-(4Z,7Z,13Z,16Z,19Z)-docosapentaenoate + oxidized [NADPH--hemoprotein reductase] + H2O + H(+). The catalysed reaction is (4Z,7Z,10Z,13Z,16Z,19Z)-docosahexaenoate + reduced [NADPH--hemoprotein reductase] + O2 = 13,14-epoxy-(4Z,7Z,10Z,16Z,19Z)-docosapentaenoate + oxidized [NADPH--hemoprotein reductase] + H2O + H(+). It carries out the reaction (4Z,7Z,10Z,13Z,16Z,19Z)-docosahexaenoate + reduced [NADPH--hemoprotein reductase] + O2 = 16,17-epoxy-(4Z,7Z,10Z,13Z,19Z)-docosapentaenoate + oxidized [NADPH--hemoprotein reductase] + H2O + H(+). The enzyme catalyses (4Z,7Z,10Z,13Z,16Z,19Z)-docosahexaenoate + reduced [NADPH--hemoprotein reductase] + O2 = 19,20-epoxy-(4Z,7Z,10Z,13Z,16Z)-docosapentaenoate + oxidized [NADPH--hemoprotein reductase] + H2O + H(+). It catalyses the reaction (7Z,10Z,13Z,16Z,19Z)-docosapentaenoate + reduced [NADPH--hemoprotein reductase] + O2 = 10,11-epoxy-(7Z,13Z,16Z,19Z)-docosatetraenoate + oxidized [NADPH--hemoprotein reductase] + H2O + H(+). The catalysed reaction is (7Z,10Z,13Z,16Z,19Z)-docosapentaenoate + reduced [NADPH--hemoprotein reductase] + O2 = 13,14-epoxy-(7Z,10Z,16Z,19Z)-docosatetraenoate + oxidized [NADPH--hemoprotein reductase] + H2O + H(+). It carries out the reaction (7Z,10Z,13Z,16Z,19Z)-docosapentaenoate + reduced [NADPH--hemoprotein reductase] + O2 = 16,17-epoxy-(7Z,10Z,13Z,19Z)-docosatetraenoate + oxidized [NADPH--hemoprotein reductase] + H2O + H(+). The enzyme catalyses (7Z,10Z,13Z,16Z,19Z)-docosapentaenoate + reduced [NADPH--hemoprotein reductase] + O2 = 19,20-epoxy-(7Z,10Z,13Z,16Z)-docosatetraenoate + oxidized [NADPH--hemoprotein reductase] + H2O + H(+). Its pathway is lipid metabolism; fatty acid metabolism. In terms of biological role, a cytochrome P450 monooxygenase involved in the metabolism of endogenous polyunsaturated fatty acids (PUFAs) and their oxygenated derivatives (oxylipins). Mechanistically, uses molecular oxygen inserting one oxygen atom into a substrate, and reducing the second into a water molecule, with two electrons provided by NADPH via cytochrome P450 reductase (CPR; NADPH-ferrihemoprotein reductase). Catalyzes the hydroxylation of carbon hydrogen bonds, with preference for omega-1 and omega-2 positions. Hydroxylates (5Z,8Z,11Z,14Z)-eicosatetraenoic acid (arachidonate) predominantly at omega-2 position to form (18R)-hydroxyeicosatetraenoic acid (18R-HETE). Exhibits omega-1 hydroxylase activity toward prostaglandin (PG) H1, PGH2 and PGI2. Catalyzes the epoxidation of double bonds of PUFAs, including docosahexaenoic and docosapentaenoic acids. Shows little activity against PGD2, PGE1, PGE2, PGF2alpha, and leukotriene B4. The chain is Cytochrome P450 4F8 from Homo sapiens (Human).